We begin with the raw amino-acid sequence, 61 residues long: Large ribosomal subunit protein bL28 (61 aa).

Residues 1 to 26 (MAKDFVTGRKTTFGKKRSHALNQTNR) are disordered.

This sequence belongs to the bacterial ribosomal protein bL28 family.

In Ligilactobacillus salivarius (strain UCC118) (Lactobacillus salivarius), this protein is Large ribosomal subunit protein bL28.